Reading from the N-terminus, the 274-residue chain is Large ribosomal subunit protein uL2 (274 aa).

A disordered region spans residues 223-274 (VAMNPVDHPHGGGEGRTSGGRHPVSPWGMPTKGFKTRKNKSTDKYIVRRRNK).

This sequence belongs to the universal ribosomal protein uL2 family. In terms of assembly, part of the 50S ribosomal subunit. Forms a bridge to the 30S subunit in the 70S ribosome.

Functionally, one of the primary rRNA binding proteins. Required for association of the 30S and 50S subunits to form the 70S ribosome, for tRNA binding and peptide bond formation. It has been suggested to have peptidyltransferase activity; this is somewhat controversial. Makes several contacts with the 16S rRNA in the 70S ribosome. This chain is Large ribosomal subunit protein uL2, found in Aliivibrio fischeri (strain ATCC 700601 / ES114) (Vibrio fischeri).